The sequence spans 111 residues: Colipase (111 aa).

A signal peptide spans M1–A16. The propeptide at A17–R21 is enterostatin, activation peptide. 5 disulfide bridges follow: C33–C44, C39–C55, C43–C77, C65–C85, and C79–C103.

It belongs to the colipase family. In terms of assembly, forms a 1:1 stoichiometric complex with pancreatic lipase. In terms of tissue distribution, expressed by the pancreas.

The protein localises to the secreted. In terms of biological role, colipase is a cofactor of pancreatic lipase. It allows the lipase to anchor itself to the lipid-water interface. Without colipase the enzyme is washed off by bile salts, which have an inhibitory effect on the lipase. Enterostatin has a biological activity as a satiety signal. The sequence is that of Colipase (CLPS) from Ictidomys tridecemlineatus (Thirteen-lined ground squirrel).